The primary structure comprises 782 residues: General transcription and DNA repair factor IIH helicase/translocase subunit XPB (782 aa).

Basic and acidic residues predominate over residues 1–11 (MGKRDRVDRDK). The interval 1–52 (MGKRDRVDRDKKKSKKRQYEEEEEDEDDAPGNESQEAVPSAAGKQVDESSTK) is disordered. Positions 6–18 (RVDRDKKKSKKRQ) match the Nuclear localization signal motif. Residues 20–30 (EEEEEDEDDAP) are compositionally biased toward acidic residues. Ser34 is subject to Phosphoserine. One can recognise a Helicase ATP-binding domain in the interval 328–489 (FGNGRARSGV…LNFLIGPKLY (162 aa)). 341–348 (PCGAGKSL) lines the ATP pocket. The DEVH box signature appears at 442–445 (EVHT). The Helicase C-terminal domain occupies 543–703 (ACQFLIKFHE…AGMEEEELAF (161 aa)). At Ser686 the chain carries Phosphoserine. Residue Ser751 is modified to Phosphoserine; by CK2.

Belongs to the helicase family. RAD25/XPB subfamily. In terms of assembly, component of the 7-subunit TFIIH core complex composed of XPB/ERCC3, XPD/ERCC2, GTF2H1, GTF2H2, GTF2H3, GTF2H4 and GTF2H5, which is active in NER. The core complex associates with the 3-subunit CDK-activating kinase (CAK) module composed of CCNH/cyclin H, CDK7 and MNAT1 to form the 10-subunit holoenzyme (holo-TFIIH) active in transcription. Interacts with PUF60. Interacts with ATF7IP. Interacts with KAT2A; leading to KAT2A recruitment to promoters and acetylation of histones. Part of TBP-based Pol II pre-initiation complex (PIC), in which Pol II core assembles with general transcription factors and other specific initiation factors including GTF2E1, GTF2E2, GTF2F1, GTF2F2, TCEA1, ERCC2, ERCC3, GTF2H2, GTF2H3, GTF2H4, GTF2H5, GTF2A1, GTF2A2, GTF2B and TBP; this large multi-subunit PIC complex mediates DNA unwinding and targets Pol II core to the transcription start site where the first phosphodiester bond forms. In terms of processing, phosphorylation on Ser-751 by CK2 controls the 5'-excision activity of ERCC1-XPF endonuclease; phosphorylated protein inhibits the excision activity and thus NER. Dephosphorylation reactivates the 5'-excision step. Phosphorylation has no effect on transcription or the 3'-5' helicase activity.

The protein resides in the nucleus. It carries out the reaction Couples ATP hydrolysis with the unwinding of duplex DNA by translocating in the 3'-5' direction.. The enzyme catalyses ATP + H2O = ADP + phosphate + H(+). Its activity is regulated as follows. Phosphorylation on Ser-751 by CK2 controls the 5'-excision activity of ERCC1-XPF endonuclease; phosphorylated protein inhibits the excision activity and thus NER. ATPase activity is stimulated by TFIIH subunit p52 (GTF2H4). DNA translocase activity by this subunit in TFIIH is stimulated by XPA, ERCC5/XPG and XFP plus ERCC1. Its function is as follows. ATP-dependent 3'-5' DNA helicase/translocase; binds dsDNA rather than ssDNA, unzipping it in a translocase rather than classical helicase activity. Component of the general transcription and DNA repair factor IIH (TFIIH) core complex. When complexed to CDK-activating kinase (CAK), involved in RNA transcription by RNA polymerase II. The ATPase activity of XPB/ERCC3, but not its helicase activity, is required for DNA opening; it may wrap around the damaged DNA wedging it open, causing localized melting and twisting that allows XPD/ERCC2 helicase to anchor. The ATP-dependent helicase activity of XPB/ERCC3 may be required for promoter escape. Also involved in transcription-coupled nucleotide excision repair (NER) of damaged DNA. In NER, TFIIH acts by opening DNA around the lesion to allow the excision of the damaged oligonucleotide and its replacement by a new DNA fragment. The structure of the TFIIH transcription complex differs from the NER-TFIIH complex; large movements by XPD/ERCC2 and XPB/ERCC3 are stabilized by XPA. The polypeptide is General transcription and DNA repair factor IIH helicase/translocase subunit XPB (Ercc3) (Rattus norvegicus (Rat)).